Here is a 306-residue protein sequence, read N- to C-terminus: MTDKIAVLLGGTSAEREVSLNSGAAVLAGLREGGIDAYPVDPKEVDVTQLKSMGFQKVFIALHGRGGEDGTLQGMLELMGLPYTGSGVMASALSMDKLRSKLLWQGAGLPVAPWVALTRAEFEKGLNDKQLAEISSLGLPVIVKPSREGSSVGMSKVVAENALQDALRLAFQHDEEVLIEKWLSGPEFTVAILGEEILPSIRIQPAGTFYDYEAKYLSDETQYFCPAGLEALQEANLQALVLKAWTTLGCKGWGRIDVMLDSDGQFYLLEANTSPGMTSHSLVPMAARQAGMSFSQLVVRILELAD.

Residues E15 and S150 contribute to the active site. Residues 101–303 (KLLWQGAGLP…FSQLVVRILE (203 aa)) form the ATP-grasp domain. 134–189 (ISSLGLPVIVKPSREGSSVGMSKVVAENALQDALRLAFQHDEEVLIEKWLSGPEFT) serves as a coordination point for ATP. D257, E270, and N272 together coordinate Mg(2+). The active site involves S281.

Belongs to the D-alanine--D-alanine ligase family. As to quaternary structure, monomer. Requires Mg(2+) as cofactor. Mn(2+) serves as cofactor.

The protein resides in the cytoplasm. It catalyses the reaction 2 D-alanine + ATP = D-alanyl-D-alanine + ADP + phosphate + H(+). The protein operates within cell wall biogenesis; peptidoglycan biosynthesis. Functionally, cell wall formation. This Escherichia coli O6:H1 (strain CFT073 / ATCC 700928 / UPEC) protein is D-alanine--D-alanine ligase B.